The sequence spans 219 residues: Octanoyltransferase (219 aa).

Residues serine 34–histidine 209 form the BPL/LPL catalytic domain. Substrate-binding positions include arginine 73 to histidine 80, serine 140 to glycine 142, and glycine 153 to alanine 155. The Acyl-thioester intermediate role is filled by cysteine 171.

This sequence belongs to the LipB family.

It localises to the cytoplasm. The enzyme catalyses octanoyl-[ACP] + L-lysyl-[protein] = N(6)-octanoyl-L-lysyl-[protein] + holo-[ACP] + H(+). Its pathway is protein modification; protein lipoylation via endogenous pathway; protein N(6)-(lipoyl)lysine from octanoyl-[acyl-carrier-protein]: step 1/2. Catalyzes the transfer of endogenously produced octanoic acid from octanoyl-acyl-carrier-protein onto the lipoyl domains of lipoate-dependent enzymes. Lipoyl-ACP can also act as a substrate although octanoyl-ACP is likely to be the physiological substrate. The protein is Octanoyltransferase of Shewanella putrefaciens (strain CN-32 / ATCC BAA-453).